We begin with the raw amino-acid sequence, 43 residues long: uncharacterized protein (43 aa).

The first 22 residues, 1 to 22, serve as a signal peptide directing secretion; it reads MKRKIIAIGIFFRLFIIHIHFS.

This is an uncharacterized protein from Schizosaccharomyces pombe (strain 972 / ATCC 24843) (Fission yeast).